The chain runs to 317 residues: Aspartate carbamoyltransferase catalytic subunit (317 aa).

Carbamoyl phosphate-binding residues include arginine 66 and threonine 67. Lysine 94 lines the L-aspartate pocket. Carbamoyl phosphate contacts are provided by arginine 116, histidine 144, and glutamine 147. Arginine 177 and arginine 231 together coordinate L-aspartate. Carbamoyl phosphate is bound by residues glycine 272 and proline 273.

It belongs to the aspartate/ornithine carbamoyltransferase superfamily. ATCase family. Heterododecamer (2C3:3R2) of six catalytic PyrB chains organized as two trimers (C3), and six regulatory PyrI chains organized as three dimers (R2).

The catalysed reaction is carbamoyl phosphate + L-aspartate = N-carbamoyl-L-aspartate + phosphate + H(+). The protein operates within pyrimidine metabolism; UMP biosynthesis via de novo pathway; (S)-dihydroorotate from bicarbonate: step 2/3. Catalyzes the condensation of carbamoyl phosphate and aspartate to form carbamoyl aspartate and inorganic phosphate, the committed step in the de novo pyrimidine nucleotide biosynthesis pathway. The sequence is that of Aspartate carbamoyltransferase catalytic subunit from Rhodopseudomonas palustris (strain BisB18).